The sequence spans 681 residues: Transferrin (681 aa).

Positions 1 to 18 (MALKLLTLIALTCAAANA) are cleaved as a signal peptide. Transferrin-like domains lie at 23–364 (YKLC…ERGH) and 371–676 (VRLC…DVIS). Disulfide bonds link C26–C60 and C35–C51. Fe(3+) is bound by residues D75 and Y108. Intrachain disulfides connect C132-C228, C181-C207, C204-C213, and C271-C284. Hydrogencarbonate contacts are provided by T134, R138, V140, and G141. A glycan (N-linked (GlcNAc...) asparagine) is linked at N218. Y222 contacts Fe(3+). The N-linked (GlcNAc...) asparagine glycan is linked to N355. 2 disulfides stabilise this stretch: C374–C411 and C384–C402. N418 is a glycosylation site (N-linked (GlcNAc...) asparagine). 3 cysteine pairs are disulfide-bonded: C478–C551, C506–C678, and C579–C596.

This sequence belongs to the transferrin family.

Its subcellular location is the secreted. Functionally, transferrins are iron binding transport proteins which bind Fe(3+) ion in association with the binding of an anion, usually bicarbonate. This transferrin binds only one Fe(3+) ion per protein molecule. The sequence is that of Transferrin from Manduca sexta (Tobacco hawkmoth).